The primary structure comprises 556 residues: Oxygen-dependent choline dehydrogenase (556 aa).

4–33 contributes to the FAD binding site; sequence DYIIIGAGSAGNVLATRLTEDPNTTVLLLE. The Proton acceptor role is filled by His-473.

This sequence belongs to the GMC oxidoreductase family. FAD serves as cofactor.

The protein resides in the cell membrane. The catalysed reaction is choline + A = betaine aldehyde + AH2. The enzyme catalyses betaine aldehyde + NAD(+) + H2O = glycine betaine + NADH + 2 H(+). Its pathway is amine and polyamine biosynthesis; betaine biosynthesis via choline pathway; betaine aldehyde from choline (cytochrome c reductase route): step 1/1. Its function is as follows. Involved in the biosynthesis of the osmoprotectant glycine betaine. Catalyzes the oxidation of choline to betaine aldehyde and betaine aldehyde to glycine betaine at the same rate. The chain is Oxygen-dependent choline dehydrogenase from Escherichia coli O6:H1 (strain CFT073 / ATCC 700928 / UPEC).